A 433-amino-acid polypeptide reads, in one-letter code: MERAISTTPILDQALTCVQSYKALAATVQELASPELQRSIEEGLAQFLTHMPEFNILVNAVEPPHTSWDYLLRNDASQRGEMTMLLMELQCEIDQMAFAIRQAMQQQHPEAEPLSNNSRLVDAWTENLRSVEDHTVWRLAFWRRDHAVHTTYPTTNPLVNQSFYFAIRNELGLDVSTQFRECIRRAITQECPTITARPALHRRLVDLVVQRRRFWNFQRRIRGLSKDAVLWGRDALAPPHFAPGDERFTCPFCFFDLPVAAYRTPRAWTDHVMSDLEGYVCLYETCSSTRSWPETCPHACTSFGAWFTAMAGSFAEGVEWCSHAFACDGRRLEEVHRPRCAAPAVRLDSVCPLCGREPAVEETELRMADAADPLQDDDQNRAKARLLLSHIAGHLEVITPMAFTWNTDRNALDPDRRLFWGDIGSPGGAGGSA.

Its pathway is secondary metabolite biosynthesis. Functionally, oxidoreductase; part of the gene cluster that mediates the biosynthesis of aculins. The pathway begins with the synthesis of 6-methylsalicylic acid by the polyketide synthase (PKS) acuA via condensation of acetate and malonate units. The 6-methylsalicylic acid decarboxylase acuB then catalyzes the decarboxylation of 6-methylsalicylic acid to yield m-cresol (also known as 3-methylphenol). These first reactions occur in the cytosol. The intermediate m-cresol is then transported into the endoplasmic reticulum where the cytochrome P450 monooxygenase acuC converts it to m-hydroxybenzyl alcohol, which is further converted to gentisyl alcohol by the cytochrome P450 monooxygenase acuD. Gentisyl alcohol is further oxidized by the oxidoreductase acuE that probably catalyzes hydroxylation of the aromatic ring. The aromatic system might then be opened by oxidation through a Baeyer-Villiger type of oxidation, which could be catalyzed by acuF, with the carboxylic acid at C-1 subsequently reduced to an aldehyde by acuG. Subsequently, a hemiacetal is formed, before the dehydrogenase acuH would reduce the double bond between C-4 and C-6. Finally, keto-enol tautomerism results in formation of aculinic acid, which exists as two diastereomers (both R/S configurations at C-1) by non-enzymatic hemiacetal formation. The carboxypeptidase acuI could be involved in the linking of aculinic acid to an aculene A moiety produced by the aculene biosynthesis cluster and which leads to the production of aculin A. AcuI may also be involved in the attachment of proline to aculinic acid to form epi-aculins A and B. The chain is Oxidoreductase acuF from Aspergillus aculeatus (strain ATCC 16872 / CBS 172.66 / WB 5094).